Here is a 489-residue protein sequence, read N- to C-terminus: Beta-galactosidase (489 aa).

Lys-116 carries the N6-methyllysine; partial modification. An N6-methyllysine modification is found at Lys-135. Residue Glu-206 is the Proton donor of the active site. N6-methyllysine; partial occurs at positions 273 and 311. At Lys-332 the chain carries N6-methyllysine. Residue Glu-387 is the Nucleophile of the active site.

In terms of assembly, homotetramer.

The enzyme catalyses Hydrolysis of terminal non-reducing beta-D-galactose residues in beta-D-galactosides.. This chain is Beta-galactosidase (lacS), found in Saccharolobus solfataricus (strain ATCC 35092 / DSM 1617 / JCM 11322 / P2) (Sulfolobus solfataricus).